Reading from the N-terminus, the 340-residue chain is Guanine nucleotide-binding protein subunit beta-1 (340 aa).

Residue S29 is modified to Phosphoserine. WD repeat units lie at residues 53-92 (GHLAKIYAMHWGNDSRNLVSASQDGKLIVWDSHTTNKVHA), 95-134 (LRSSWVMTCAYAPSGSYVACGGLDNMCSIYNLKTREGNVR), 141-179 (GHGGYLSCCRFLDDNQIVTSSGDMSCGLWDIETGLQVTS), 182-221 (GHTGDVMALSLAPQCKTFVSGACDASAKLWDIREGVCKQT), 224-263 (GHESDINAVTFFPNGQAFATGSDDATCRLFDIRADQELAM), 268-307 (NIICGITSVAFSKSGRLLLAGYDDFNCNVWDTMKAERSGI), and 310-340 (GHDNRVSCLGVTENGMAVATGSWDSFLRVWN).

This sequence belongs to the WD repeat G protein beta family. As to quaternary structure, g proteins are composed of 3 units, alpha, beta and gamma. Expressed in the brain neuropil and cortex, and the thoracic ganglion (at protein level). Expression detected in eye at protein level but not at mRNA level, suggesting cross reactivity of antibodies to the similar Gbeta76C protein.

Its function is as follows. Guanine nucleotide-binding proteins (G proteins) are involved as a modulator or transducer in various transmembrane signaling systems. The beta and gamma chains are required for the GTPase activity, for replacement of GDP by GTP, and for G protein-effector interaction. In Drosophila melanogaster (Fruit fly), this protein is Guanine nucleotide-binding protein subunit beta-1 (Gbeta13F).